The following is a 480-amino-acid chain: MEVAPEQPRWMAHPAVLNAQHPDSHHPGLAHNYMEPAQLLPPDEVDVFFNHLDSQGNPYYANPAHARARVSYSPAHARLTGGQMCRPHLLHSPGLPWLDGGKAALSAAAAHHHSPWTVSPFSKTPLHPSAAGAPGGPLSVYPGAAGGSGGGSGSSVASLTPTAAHSGSHLFGFPPTPPKEVSPDPSTTGAASPASSSAGGSVARGEDKDGVKYQVSLSESMKMEGGSPLRPGLATMGTQPATHHPIPTYPSYVPAAAHDYGSSLFHPGGFLGGPASSFTPKQRSKARSCSEGRECVNCGATATPLWRRDGTGHYLCNACGLYHKMNGQNRPLIKPKRRLSAARRAGTCCANCQTTTTTLWRRNANGDPVCNACGLYYKLHNVNRPLTMKKEGIQTRNRKMSSKSKKSKKGAECFEELSKCMQEKSPPFSAAALAGHMAPVGHLPPFSHSGHILPTPTPIHPSSSLSFGHPHPSSMVTAMG.

Serine 73 bears the Phosphoserine mark. Asymmetric dimethylarginine is present on arginine 86. A disordered region spans residues 166–208; that stretch reads SGSHLFGFPPTPPKEVSPDPSTTGAASPASSSAGGSVARGEDK. Residues 183–201 show a composition bias toward low complexity; the sequence is PDPSTTGAASPASSSAGGS. Serine 192 carries the post-translational modification Phosphoserine. 2 consecutive GATA-type zinc fingers follow at residues 295 to 319 and 349 to 373; these read CVNCGATATPLWRRDGTGHYLCNAC and CANCQTTTTTLWRRNANGDPVCNAC. Lysine 389 participates in a covalent cross-link: Glycyl lysine isopeptide (Lys-Gly) (interchain with G-Cter in SUMO2). The segment at 457 to 480 is disordered; it reads TPIHPSSSLSFGHPHPSSMVTAMG.

As to quaternary structure, interacts with BRD3. Interacts with AR and CCAR1. Interacts with MDFIC.

It is found in the nucleus. Transcriptional activator which regulates endothelin-1 gene expression in endothelial cells. Binds to the consensus sequence 5'-AGATAG-3'. This chain is Endothelial transcription factor GATA-2 (Gata2), found in Mus musculus (Mouse).